We begin with the raw amino-acid sequence, 447 residues long: Na(+)-translocating NADH-quinone reductase subunit A (447 aa).

It belongs to the NqrA family. As to quaternary structure, composed of six subunits; NqrA, NqrB, NqrC, NqrD, NqrE and NqrF.

It catalyses the reaction a ubiquinone + n Na(+)(in) + NADH + H(+) = a ubiquinol + n Na(+)(out) + NAD(+). Its function is as follows. NQR complex catalyzes the reduction of ubiquinone-1 to ubiquinol by two successive reactions, coupled with the transport of Na(+) ions from the cytoplasm to the periplasm. NqrA to NqrE are probably involved in the second step, the conversion of ubisemiquinone to ubiquinol. The protein is Na(+)-translocating NADH-quinone reductase subunit A of Neisseria meningitidis serogroup A / serotype 4A (strain DSM 15465 / Z2491).